The primary structure comprises 460 residues: Argininosuccinate lyase (460 aa).

The protein belongs to the lyase 1 family. Argininosuccinate lyase subfamily.

Its subcellular location is the cytoplasm. It carries out the reaction 2-(N(omega)-L-arginino)succinate = fumarate + L-arginine. The protein operates within amino-acid biosynthesis; L-arginine biosynthesis; L-arginine from L-ornithine and carbamoyl phosphate: step 3/3. This chain is Argininosuccinate lyase, found in Rhodopirellula baltica (strain DSM 10527 / NCIMB 13988 / SH1).